A 432-amino-acid chain; its full sequence is C-type cytochrome OmcS (432 aa).

Positions 1–25 are cleaved as a signal peptide; sequence MKKGMKVSLSVAAAALLMSAPAAFA.

Heme is required as a cofactor.

Its subcellular location is the cell outer membrane. It localises to the cell surface. Functionally, plays an important role in extracellular electron transfer. Can transfer electrons to insoluble Fe(3+) oxides as well as other extracellular electron acceptors, including Mn(4+) oxide and humic substances. Essential for direct interspecies electron transfer (DIET) in cocultures with G.metallireducens. This chain is C-type cytochrome OmcS, found in Geobacter sulfurreducens (strain ATCC 51573 / DSM 12127 / PCA).